We begin with the raw amino-acid sequence, 142 residues long: Large ribosomal subunit protein uL11 (142 aa).

It belongs to the universal ribosomal protein uL11 family. Part of the ribosomal stalk of the 50S ribosomal subunit. Interacts with L10 and the large rRNA to form the base of the stalk. L10 forms an elongated spine to which L12 dimers bind in a sequential fashion forming a multimeric L10(L12)X complex. One or more lysine residues are methylated.

Its function is as follows. Forms part of the ribosomal stalk which helps the ribosome interact with GTP-bound translation factors. This Shewanella halifaxensis (strain HAW-EB4) protein is Large ribosomal subunit protein uL11.